Here is a 487-residue protein sequence, read N- to C-terminus: MKYKSIMLLGTASSVGKSTVAAAFCRYFKKKGYRVAPYKALNISLNSFVTKDGDEIGRAQVVQAEACEIDPKEYMNPILMKPSAGFKTQVIVRGKVHCTMDAYKYKELNKYLKEKAKEAYDDISNDYDLIVLEGSGSCAEINLRETDIANMHTAKMADADVILVSDINRGGVFASIVGTIMLLTEEERKRVKGVIINKFRGKREFFEPAMRQIEEIIKIPVLGVMPYFDLDIEEEDSASIKLRKGNGKGIDIAIVRLPHMSNFTDFNSLGRIKDVCIRYAENPKDLENANMIIIPGSKNTIDDLIYLKESGFKEALINESSKGKLIFGICGGYQILGEKIIDSLGVEGDIREEEGLGLLNIVTSFNKEKTTKQVVAFDLEGNEVSGYEIHNGESVPTAKENIWIKEQNGNVLGMKNKEQNVFGTYIHGIFDEGDFGEKLINKLKKELNIEESNDVNYKDYKMSQYDKLCELLEENIDMAYVENLIRY.

In terms of domain architecture, GATase cobBQ-type spans glycine 249–phenylalanine 435. Residue cysteine 330 is the Nucleophile of the active site. Histidine 427 is an active-site residue.

Belongs to the CobB/CobQ family. CobQ subfamily.

The protein operates within cofactor biosynthesis; adenosylcobalamin biosynthesis. Its function is as follows. Catalyzes amidations at positions B, D, E, and G on adenosylcobyrinic A,C-diamide. NH(2) groups are provided by glutamine, and one molecule of ATP is hydrogenolyzed for each amidation. The protein is Cobyric acid synthase of Clostridium perfringens (strain SM101 / Type A).